A 649-amino-acid chain; its full sequence is DNA mismatch repair protein MutL (649 aa).

Belongs to the DNA mismatch repair MutL/HexB family.

In terms of biological role, this protein is involved in the repair of mismatches in DNA. It is required for dam-dependent methyl-directed DNA mismatch repair. May act as a 'molecular matchmaker', a protein that promotes the formation of a stable complex between two or more DNA-binding proteins in an ATP-dependent manner without itself being part of a final effector complex. In Streptococcus pneumoniae (strain P1031), this protein is DNA mismatch repair protein MutL.